The primary structure comprises 512 residues: Glycerol kinase (512 aa).

Thr-14 is an ADP binding site. 3 residues coordinate ATP: Thr-14, Thr-15, and Ser-16. Residue Thr-14 participates in sn-glycerol 3-phosphate binding. Arg-18 contacts ADP. 4 residues coordinate sn-glycerol 3-phosphate: Arg-83, Glu-84, Tyr-135, and Asp-244. Glycerol contacts are provided by Arg-83, Glu-84, Tyr-135, Asp-244, and Gln-245. Residues Thr-266, Gly-309, Gly-410, and Asn-414 each coordinate ADP. ATP contacts are provided by Thr-266, Gly-309, and Gly-410.

It belongs to the FGGY kinase family.

It carries out the reaction glycerol + ATP = sn-glycerol 3-phosphate + ADP + H(+). It functions in the pathway polyol metabolism; glycerol degradation via glycerol kinase pathway; sn-glycerol 3-phosphate from glycerol: step 1/1. Inhibited by fructose 1,6-bisphosphate (FBP). Functionally, key enzyme in the regulation of glycerol uptake and metabolism. Catalyzes the phosphorylation of glycerol to yield sn-glycerol 3-phosphate. The chain is Glycerol kinase from Gluconobacter oxydans (strain 621H) (Gluconobacter suboxydans).